An 807-amino-acid chain; its full sequence is uncharacterized protein (807 aa).

Residues 281-566 (IIQSLKSEEF…DKILFLGTNI (286 aa)) form the Reverse transcriptase domain.

The protein localises to the mitochondrion. This is an uncharacterized protein from Schizosaccharomyces pombe (strain 972 / ATCC 24843) (Fission yeast).